Reading from the N-terminus, the 116-residue chain is Large ribosomal subunit protein bL19 (116 aa).

It belongs to the bacterial ribosomal protein bL19 family.

Its function is as follows. This protein is located at the 30S-50S ribosomal subunit interface and may play a role in the structure and function of the aminoacyl-tRNA binding site. This chain is Large ribosomal subunit protein bL19, found in Nocardioides sp. (strain ATCC BAA-499 / JS614).